A 223-amino-acid chain; its full sequence is MGQKGCPIGFRTAVTKKWRSLWYGNKQEFGKFLIEDVKIREHLRKKPSCQGAAGFIVRRMSGKIEVTIQTARPGLVIGKKGAEVDLLKEELRKLTGKEVWVEIAEIKRPELNAKLVADNIARQIERRVSFRRAMKKAMQSVMDAGAIGVKIQVSGRLAGAEIARSEWYKNGRVPLHTLRADIDYATASAETTYGIIGVKVWINLGEKTSTANANTGATAPAAQ.

A KH type-2 domain is found at 39–117 (IREHLRKKPS…RPELNAKLVA (79 aa)).

Belongs to the universal ribosomal protein uS3 family. As to quaternary structure, part of the 30S ribosomal subunit. Forms a tight complex with proteins S10 and S14.

Its function is as follows. Binds the lower part of the 30S subunit head. Binds mRNA in the 70S ribosome, positioning it for translation. The chain is Small ribosomal subunit protein uS3 from Chlamydia caviae (strain ATCC VR-813 / DSM 19441 / 03DC25 / GPIC) (Chlamydophila caviae).